The sequence spans 321 residues: Lipoyl synthase (321 aa).

The [4Fe-4S] cluster site is built by Cys68, Cys73, Cys79, Cys94, Cys98, Cys101, and Ser308. The region spanning Phe80–Thr297 is the Radical SAM core domain.

It belongs to the radical SAM superfamily. Lipoyl synthase family. It depends on [4Fe-4S] cluster as a cofactor.

The protein localises to the cytoplasm. It catalyses the reaction [[Fe-S] cluster scaffold protein carrying a second [4Fe-4S](2+) cluster] + N(6)-octanoyl-L-lysyl-[protein] + 2 oxidized [2Fe-2S]-[ferredoxin] + 2 S-adenosyl-L-methionine + 4 H(+) = [[Fe-S] cluster scaffold protein] + N(6)-[(R)-dihydrolipoyl]-L-lysyl-[protein] + 4 Fe(3+) + 2 hydrogen sulfide + 2 5'-deoxyadenosine + 2 L-methionine + 2 reduced [2Fe-2S]-[ferredoxin]. Its pathway is protein modification; protein lipoylation via endogenous pathway; protein N(6)-(lipoyl)lysine from octanoyl-[acyl-carrier-protein]: step 2/2. Functionally, catalyzes the radical-mediated insertion of two sulfur atoms into the C-6 and C-8 positions of the octanoyl moiety bound to the lipoyl domains of lipoate-dependent enzymes, thereby converting the octanoylated domains into lipoylated derivatives. The chain is Lipoyl synthase from Salmonella paratyphi A (strain AKU_12601).